The following is a 63-amino-acid chain: UPF0370 protein ECA1289 (63 aa).

The chain crosses the membrane as a helical span at residues 3–23; the sequence is WLADYWWIILIILIGMLINGI. A disordered region spans residues 39–63; it reads PKLPPHRDNNDKWDNEEDDWPKKKP.

The protein belongs to the UPF0370 family.

It localises to the cell membrane. The protein is UPF0370 protein ECA1289 of Pectobacterium atrosepticum (strain SCRI 1043 / ATCC BAA-672) (Erwinia carotovora subsp. atroseptica).